Reading from the N-terminus, the 115-residue chain is Large ribosomal subunit protein bL20 (115 aa).

This sequence belongs to the bacterial ribosomal protein bL20 family.

In terms of biological role, binds directly to 23S ribosomal RNA and is necessary for the in vitro assembly process of the 50S ribosomal subunit. It is not involved in the protein synthesizing functions of that subunit. This Chlorobium phaeobacteroides (strain DSM 266 / SMG 266 / 2430) protein is Large ribosomal subunit protein bL20.